A 338-amino-acid polypeptide reads, in one-letter code: Uroporphyrinogen decarboxylase (338 aa).

Residues 25–29 (RQAGR), F44, D75, Y146, S201, and H314 contribute to the substrate site.

It belongs to the uroporphyrinogen decarboxylase family. In terms of assembly, homodimer.

The protein resides in the cytoplasm. The catalysed reaction is uroporphyrinogen III + 4 H(+) = coproporphyrinogen III + 4 CO2. The protein operates within porphyrin-containing compound metabolism; protoporphyrin-IX biosynthesis; coproporphyrinogen-III from 5-aminolevulinate: step 4/4. In terms of biological role, catalyzes the decarboxylation of four acetate groups of uroporphyrinogen-III to yield coproporphyrinogen-III. The polypeptide is Uroporphyrinogen decarboxylase (Aquifex aeolicus (strain VF5)).